A 185-amino-acid polypeptide reads, in one-letter code: MGCDDGRVEKLGPQAGFTAVACISWDNRLRLPLAGSLGLVRVDGVDATSVLAGLVLRLGAAGRPVLLDSLTIGGFNIVSPPGVERLTGSPVLAVYNYRPSLERLESGLRSSRLPLAGVRARVLSLVEEAAEASTPHGPVYLVAWGLEASEARRLVLETQVYGRKPEPVRIAHYTASEASEALRRV.

The protein belongs to the UPF0215 family.

In Aeropyrum pernix (strain ATCC 700893 / DSM 11879 / JCM 9820 / NBRC 100138 / K1), this protein is UPF0215 protein APE_0476.1.